The sequence spans 145 residues: Aminoglycoside N(6')-acetyltransferase type 1 (145 aa).

The N-acetyltransferase domain maps to 1 to 145 (MDIRQMNKTH…ERVIFYRKRC (145 aa)). Positions 22, 25, 66, and 79 each coordinate substrate. Acetyl-CoA-binding positions include 81 to 83 (IFV) and 89 to 94 (QRGVAK). Aspartate 115 provides a ligand contact to substrate. Asparagine 120 contributes to the acetyl-CoA binding site. Glutamate 136 provides a ligand contact to substrate.

As to quaternary structure, homodimer.

The catalysed reaction is kanamycin B + acetyl-CoA = N(6')-acetylkanamycin B + CoA + H(+). Functionally, catalyzes the transfer of an acetyl group from acetyl-CoA to the 6'-amino group of aminoglycoside molecules conferring resistance to antibiotics containing the purpurosamine ring including amikacin, tobramycin, dibekacin and ribostamycin. Able to acetylate eukaryotic histone proteins. This chain is Aminoglycoside N(6')-acetyltransferase type 1, found in Salmonella enteritidis.